A 321-amino-acid polypeptide reads, in one-letter code: Malate dehydrogenase (321 aa).

Residues 10-15 and Asp34 each bind NAD(+); that span reads GAGQIG. 2 residues coordinate substrate: Arg83 and Arg89. NAD(+) is bound by residues Asn96 and 119 to 121; that span reads VTN. Substrate contacts are provided by Asn121 and Arg152. The Proton acceptor role is filled by His176.

It belongs to the LDH/MDH superfamily. MDH type 3 family.

It carries out the reaction (S)-malate + NAD(+) = oxaloacetate + NADH + H(+). In terms of biological role, catalyzes the reversible oxidation of malate to oxaloacetate. In Azorhizobium caulinodans (strain ATCC 43989 / DSM 5975 / JCM 20966 / LMG 6465 / NBRC 14845 / NCIMB 13405 / ORS 571), this protein is Malate dehydrogenase.